Here is a 258-residue protein sequence, read N- to C-terminus: Thiazole synthase (258 aa).

The active-site Schiff-base intermediate with DXP is K100. 1-deoxy-D-xylulose 5-phosphate-binding positions include G161, 187–188 (AG), and 209–210 (NT).

The protein belongs to the ThiG family. As to quaternary structure, homotetramer. Forms heterodimers with either ThiH or ThiS.

It is found in the cytoplasm. It catalyses the reaction [ThiS sulfur-carrier protein]-C-terminal-Gly-aminoethanethioate + 2-iminoacetate + 1-deoxy-D-xylulose 5-phosphate = [ThiS sulfur-carrier protein]-C-terminal Gly-Gly + 2-[(2R,5Z)-2-carboxy-4-methylthiazol-5(2H)-ylidene]ethyl phosphate + 2 H2O + H(+). The protein operates within cofactor biosynthesis; thiamine diphosphate biosynthesis. Catalyzes the rearrangement of 1-deoxy-D-xylulose 5-phosphate (DXP) to produce the thiazole phosphate moiety of thiamine. Sulfur is provided by the thiocarboxylate moiety of the carrier protein ThiS. In vitro, sulfur can be provided by H(2)S. The protein is Thiazole synthase of Campylobacter jejuni (strain RM1221).